Consider the following 263-residue polypeptide: Lens fiber major intrinsic protein (263 aa).

The Cytoplasmic segment spans residues 1 to 9 (MWELRSASF). A helical transmembrane segment spans residues 10–29 (WRAICAEFFASLFYVFFGLG). Over 30–41 (ASLRWAPGPLHV) the chain is Extracellular. Residues 42–59 (LQVALAFGLALATLVQAV) traverse the membrane as a helical segment. The Cytoplasmic segment spans residues 60-61 (GH). The segment at residues 62–77 (ISGAHVNPAVTFAFLV) is an intramembrane region (discontinuously helical). The NPA 1 motif lies at 68–70 (NPA). Over 78-82 (GSQMS) the chain is Cytoplasmic. Residues 83–106 (LLRAICYMVAQLLGAVAGAAVLYS) traverse the membrane as a helical segment. The Extracellular segment spans residues 107–127 (VTPPAVRGNLALNTLHPGVSV). Residues 128–148 (GQATIVEIFLTLQFVLCIFAT) form a helical membrane-spanning segment. At 149 to 156 (YDERRNGR) the chain is on the cytoplasmic side. Residues 157 to 175 (LGSVALAVGFSLTLGHLFG) traverse the membrane as a helical segment. The Extracellular portion of the chain corresponds to 176–178 (MYY). The segment at residues 179-193 (TGAGMNPARSFAPAI) is an intramembrane region (discontinuously helical). An NPA 2 motif is present at residues 184-186 (NPA). Residues 194-200 (LTRNFTN) lie on the Extracellular side of the membrane. Residues 201–222 (HWVYWVGPVIGAGLGSLLYDFL) form a helical membrane-spanning segment. At 223 to 263 (LFPRLKSVSERLSILKGSRPSESNGQPEVTGEPVELKTQAL) the chain is on the cytoplasmic side. Residues 227-237 (LKSVSERLSIL) are interaction with CALM. The residue at position 235 (S235) is a Phosphoserine. Residues 239 to 263 (GSRPSESNGQPEVTGEPVELKTQAL) form a disordered region. Residue S243 is modified to Phosphoserine; by PKA. A Phosphoserine modification is found at S245. N246 carries the post-translational modification Deamidated asparagine.

The protein belongs to the MIP/aquaporin (TC 1.A.8) family. As to quaternary structure, homotetramer; each monomer provides an independent water pore. Two homotetramers on opposing membranes can dimerize, forming a cell-cell junction. Interacts with CALM; the calcium-calmodulin/CALM complex interacts with the cytoplasmic domains of two aquaporins, leading to channel closure. Interacts with BFSP1 (via C-terminus); prevents calcium-dependent inhibition of the water channel activity. Fatty acylated at Met-1 and Lys-238. The acyl modifications, in decreasing order of ion abundance, are: oleoyl (C18:1) &gt; palmitoyl (C16:0) &gt; stearoyl (C18:0) &gt; eicosenoyl (C20:1) &gt; dihomo-gamma-linolenoyl (C20:3) &gt; palmitoleoyl (C16:1) &gt; eicosadienoyl (C20:2). Post-translationally, subject to partial proteolytic cleavage in the eye lens core. Partial proteolysis promotes interactions between tetramers from adjoining membranes. As to expression, major component of lens fiber junctions.

The protein resides in the cell membrane. Its subcellular location is the cell junction. It catalyses the reaction H2O(in) = H2O(out). Its activity is regulated as follows. The water channel activity is inhibited by calcium through calmodulin/CALM. Its function is as follows. Aquaporins form homotetrameric transmembrane channels, with each monomer independently mediating water transport across the plasma membrane along its osmotic gradient. Specifically expressed in lens fiber cells, this aquaporin is crucial for maintaining lens water homeostasis and transparency. Beyond water permeability, it also acts as a cell-to-cell adhesion molecule, forming thin junctions between lens fiber cells that are essential for maintaining the ordered structure and transparency of the lens. This Bos taurus (Bovine) protein is Lens fiber major intrinsic protein.